The chain runs to 310 residues: MIFTGTANTRLAVDVVNHLDMSLGKMTVGRYSDGEVMVEINENVRGKDVFVLQPTCAPTNDNLMEIMVMVDALRRASAGRITAAIPYFGYARQDRRPRSARVAISAKVVANMLQVAGVDRVLTMDLHADQIQGFFDIPVDNIYAGPILLGDIWRRNFSNLVVVSPDIGGVVRARALAKQLEADLAIIDKRRPRANVSEVMNIIGEVDGRTCIIMDDMVDTAGTLCKAAQALKDRGAGAVYAYCTHPVLSGGAIERIETSSLDELVVTDTIPLSEQAQACGKIRQLSCAALLGETILRISNAESVSSLFAD.

ATP is bound by residues 33–35 (DGE) and 92–93 (RQ). The Mg(2+) site is built by His-127 and Asp-166. Lys-189 is a catalytic residue. D-ribose 5-phosphate-binding positions include Arg-191, Asp-215, and 219 to 223 (DTAGT).

Belongs to the ribose-phosphate pyrophosphokinase family. Class I subfamily. As to quaternary structure, homohexamer. Requires Mg(2+) as cofactor.

It is found in the cytoplasm. It catalyses the reaction D-ribose 5-phosphate + ATP = 5-phospho-alpha-D-ribose 1-diphosphate + AMP + H(+). It functions in the pathway metabolic intermediate biosynthesis; 5-phospho-alpha-D-ribose 1-diphosphate biosynthesis; 5-phospho-alpha-D-ribose 1-diphosphate from D-ribose 5-phosphate (route I): step 1/1. Involved in the biosynthesis of the central metabolite phospho-alpha-D-ribosyl-1-pyrophosphate (PRPP) via the transfer of pyrophosphoryl group from ATP to 1-hydroxyl of ribose-5-phosphate (Rib-5-P). This chain is Ribose-phosphate pyrophosphokinase, found in Bordetella pertussis (strain Tohama I / ATCC BAA-589 / NCTC 13251).